We begin with the raw amino-acid sequence, 374 residues long: Dual-specificity RNA methyltransferase RlmN (374 aa).

Glu94 acts as the Proton acceptor in catalysis. Residues 100–339 enclose the Radical SAM core domain; it reads EEDRATLCVS…VTIRKTRGDD (240 aa). Cys107 and Cys344 are oxidised to a cystine. Residues Cys114, Cys118, and Cys121 each contribute to the [4Fe-4S] cluster site. Residues 168-169, Ser200, 222-224, and Asn301 each bind S-adenosyl-L-methionine; these read GE and SLH. The active-site S-methylcysteine intermediate is Cys344.

This sequence belongs to the radical SAM superfamily. RlmN family. The cofactor is [4Fe-4S] cluster.

The protein resides in the cytoplasm. The enzyme catalyses adenosine(2503) in 23S rRNA + 2 reduced [2Fe-2S]-[ferredoxin] + 2 S-adenosyl-L-methionine = 2-methyladenosine(2503) in 23S rRNA + 5'-deoxyadenosine + L-methionine + 2 oxidized [2Fe-2S]-[ferredoxin] + S-adenosyl-L-homocysteine. It carries out the reaction adenosine(37) in tRNA + 2 reduced [2Fe-2S]-[ferredoxin] + 2 S-adenosyl-L-methionine = 2-methyladenosine(37) in tRNA + 5'-deoxyadenosine + L-methionine + 2 oxidized [2Fe-2S]-[ferredoxin] + S-adenosyl-L-homocysteine. Specifically methylates position 2 of adenine 2503 in 23S rRNA and position 2 of adenine 37 in tRNAs. m2A2503 modification seems to play a crucial role in the proofreading step occurring at the peptidyl transferase center and thus would serve to optimize ribosomal fidelity. In Vibrio vulnificus (strain CMCP6), this protein is Dual-specificity RNA methyltransferase RlmN.